Consider the following 509-residue polypeptide: Histidine--tRNA ligase, cytoplasmic (509 aa).

Ala2 bears the N-acetylalanine mark. The 57-residue stretch at 3–59 (DRAALEELVRLQGAHVRGLKEQKASAEQIEEEVTKLLKLKAQLGQDEGKQKFVLKTP) folds into the WHEP-TRS domain. Phosphoserine is present on Ser66. Residues 130–132 (DLT), Arg157, Gln173, Asp177, Arg326, and 330–331 (YY) each bind L-histidine. The residue at position 356 (Ser356) is a Phosphoserine.

Belongs to the class-II aminoacyl-tRNA synthetase family. In terms of assembly, homodimer.

The protein localises to the cytoplasm. It catalyses the reaction tRNA(His) + L-histidine + ATP = L-histidyl-tRNA(His) + AMP + diphosphate + H(+). In terms of biological role, catalyzes the ATP-dependent ligation of histidine to the 3'-end of its cognate tRNA, via the formation of an aminoacyl-adenylate intermediate (His-AMP). Plays a role in axon guidance. The sequence is that of Histidine--tRNA ligase, cytoplasmic (Hars1) from Mus musculus (Mouse).